The chain runs to 150 residues: Large ribosomal subunit protein bL9 (150 aa).

It belongs to the bacterial ribosomal protein bL9 family.

In terms of biological role, binds to the 23S rRNA. This is Large ribosomal subunit protein bL9 from Staphylococcus aureus (strain NCTC 8325 / PS 47).